The primary structure comprises 184 residues: ATP synthase subunit b, chloroplastic (184 aa).

A helical transmembrane segment spans residues 27–49 (LATNPINLSVVLGVLIFFGKGVL).

It belongs to the ATPase B chain family. F-type ATPases have 2 components, F(1) - the catalytic core - and F(0) - the membrane proton channel. F(1) has five subunits: alpha(3), beta(3), gamma(1), delta(1), epsilon(1). F(0) has four main subunits: a(1), b(1), b'(1) and c(10-14). The alpha and beta chains form an alternating ring which encloses part of the gamma chain. F(1) is attached to F(0) by a central stalk formed by the gamma and epsilon chains, while a peripheral stalk is formed by the delta, b and b' chains.

It is found in the plastid. It localises to the chloroplast thylakoid membrane. F(1)F(0) ATP synthase produces ATP from ADP in the presence of a proton or sodium gradient. F-type ATPases consist of two structural domains, F(1) containing the extramembraneous catalytic core and F(0) containing the membrane proton channel, linked together by a central stalk and a peripheral stalk. During catalysis, ATP synthesis in the catalytic domain of F(1) is coupled via a rotary mechanism of the central stalk subunits to proton translocation. In terms of biological role, component of the F(0) channel, it forms part of the peripheral stalk, linking F(1) to F(0). In Platanus occidentalis (Sycamore), this protein is ATP synthase subunit b, chloroplastic.